Reading from the N-terminus, the 249-residue chain is Glutathione S-transferase S1 (249 aa).

Positions 1 to 38 are enriched in low complexity; the sequence is MADEAQAPPAEGAPPAEGEAPPPAEGAEGAVEGGEAAP. Positions 1–42 are disordered; it reads MADEAQAPPAEGAPPAEGEAPPPAEGAEGAVEGGEAAPPAEP. The 78-residue stretch at 48-125 folds into the GST N-terminal domain; sequence HSYTLFYFNV…FLAKTVGLCG (78 aa). Residues Tyr-54, Trp-85, Lys-89, 96–97, and 109–110 contribute to the glutathione site; these read QM and QS. The GST C-terminal domain occupies 127–249; that stretch reads TPWEDLQIDI…WIEKRPVTEV (123 aa).

It belongs to the GST superfamily. Sigma family. Homodimer.

It carries out the reaction RX + glutathione = an S-substituted glutathione + a halide anion + H(+). Functionally, conjugation of reduced glutathione to a wide number of exogenous and endogenous hydrophobic electrophiles. May be involved in the detoxification of metabolites produced during cellular division and morphogenesis. The protein is Glutathione S-transferase S1 of Drosophila melanogaster (Fruit fly).